The primary structure comprises 502 residues: Glutamate--tRNA ligase (502 aa).

The short motif at 12–22 (PSPTGYLHVGG) is the 'HIGH' region element. The 'KMSKS' region signature appears at 259–263 (KLSKR). Position 262 (Lys262) interacts with ATP.

Belongs to the class-I aminoacyl-tRNA synthetase family. Glutamate--tRNA ligase type 1 subfamily. In terms of assembly, monomer.

It is found in the cytoplasm. The enzyme catalyses tRNA(Glu) + L-glutamate + ATP = L-glutamyl-tRNA(Glu) + AMP + diphosphate. Catalyzes the attachment of glutamate to tRNA(Glu) in a two-step reaction: glutamate is first activated by ATP to form Glu-AMP and then transferred to the acceptor end of tRNA(Glu). The polypeptide is Glutamate--tRNA ligase (Pelodictyon phaeoclathratiforme (strain DSM 5477 / BU-1)).